A 177-amino-acid chain; its full sequence is Large ribosomal subunit protein uL10 (177 aa).

This sequence belongs to the universal ribosomal protein uL10 family. In terms of assembly, part of the ribosomal stalk of the 50S ribosomal subunit. The N-terminus interacts with L11 and the large rRNA to form the base of the stalk. The C-terminus forms an elongated spine to which L12 dimers bind in a sequential fashion forming a multimeric L10(L12)X complex.

Forms part of the ribosomal stalk, playing a central role in the interaction of the ribosome with GTP-bound translation factors. In Caldanaerobacter subterraneus subsp. tengcongensis (strain DSM 15242 / JCM 11007 / NBRC 100824 / MB4) (Thermoanaerobacter tengcongensis), this protein is Large ribosomal subunit protein uL10.